The sequence spans 274 residues: Large ribosomal subunit protein uL2 (274 aa).

Positions 223–274 (GIAMNPVDHPHGGGEGRSKGNHPVTPWGMPTKGYKTRKKKQSDKYIISRRKK) are disordered. Over residues 230 to 240 (DHPHGGGEGRS) the composition is skewed to basic and acidic residues. Positions 256-274 (YKTRKKKQSDKYIISRRKK) are enriched in basic residues.

Belongs to the universal ribosomal protein uL2 family. Part of the 50S ribosomal subunit. Forms a bridge to the 30S subunit in the 70S ribosome.

Functionally, one of the primary rRNA binding proteins. Required for association of the 30S and 50S subunits to form the 70S ribosome, for tRNA binding and peptide bond formation. It has been suggested to have peptidyltransferase activity; this is somewhat controversial. Makes several contacts with the 16S rRNA in the 70S ribosome. This is Large ribosomal subunit protein uL2 from Nautilia profundicola (strain ATCC BAA-1463 / DSM 18972 / AmH).